Consider the following 191-residue polypeptide: Protein YceI (191 aa).

The signal sequence occupies residues methionine 1 to alanine 22.

It belongs to the UPF0312 family. Type 1 subfamily.

It localises to the periplasm. This is Protein YceI from Salmonella dublin (strain CT_02021853).